A 251-amino-acid chain; its full sequence is Imidazole glycerol phosphate synthase subunit HisF (251 aa).

Residues aspartate 11 and aspartate 130 contribute to the active site.

Belongs to the HisA/HisF family. Heterodimer of HisH and HisF.

The protein localises to the cytoplasm. The enzyme catalyses 5-[(5-phospho-1-deoxy-D-ribulos-1-ylimino)methylamino]-1-(5-phospho-beta-D-ribosyl)imidazole-4-carboxamide + L-glutamine = D-erythro-1-(imidazol-4-yl)glycerol 3-phosphate + 5-amino-1-(5-phospho-beta-D-ribosyl)imidazole-4-carboxamide + L-glutamate + H(+). It participates in amino-acid biosynthesis; L-histidine biosynthesis; L-histidine from 5-phospho-alpha-D-ribose 1-diphosphate: step 5/9. Functionally, IGPS catalyzes the conversion of PRFAR and glutamine to IGP, AICAR and glutamate. The HisF subunit catalyzes the cyclization activity that produces IGP and AICAR from PRFAR using the ammonia provided by the HisH subunit. This chain is Imidazole glycerol phosphate synthase subunit HisF, found in Chlorobium phaeobacteroides (strain DSM 266 / SMG 266 / 2430).